We begin with the raw amino-acid sequence, 308 residues long: Ribosomal RNA small subunit methyltransferase H (308 aa).

S-adenosyl-L-methionine-binding positions include 36–38 (GGH), Asp55, Phe86, Asp103, and Gln110.

This sequence belongs to the methyltransferase superfamily. RsmH family.

The protein resides in the cytoplasm. The catalysed reaction is cytidine(1402) in 16S rRNA + S-adenosyl-L-methionine = N(4)-methylcytidine(1402) in 16S rRNA + S-adenosyl-L-homocysteine + H(+). In terms of biological role, specifically methylates the N4 position of cytidine in position 1402 (C1402) of 16S rRNA. This chain is Ribosomal RNA small subunit methyltransferase H, found in Helicobacter pylori (strain G27).